The following is a 104-amino-acid chain: Large ribosomal subunit protein uL24 (104 aa).

The protein belongs to the universal ribosomal protein uL24 family. Part of the 50S ribosomal subunit.

Its function is as follows. One of two assembly initiator proteins, it binds directly to the 5'-end of the 23S rRNA, where it nucleates assembly of the 50S subunit. In terms of biological role, one of the proteins that surrounds the polypeptide exit tunnel on the outside of the subunit. This is Large ribosomal subunit protein uL24 from Bartonella quintana (strain Toulouse) (Rochalimaea quintana).